A 900-amino-acid polypeptide reads, in one-letter code: MNEKSFNYDFSVIMPIYNVELYLTEAIESIINQTIGFENIQLILVNDDSPDKSEIICKEYAQKYPNNIVYAKKQNGGVSSARNYGLKYAEGRYIQFLDPDDLVSEGTFENVLNFFDEHKNEIDIVAIPIFFAEGRTGEHNLNNKFSSTRILDVEKEPHHILTHCCSTFIKKDALKNIRFDENCKIGEDAKLVNLIISQKKKYGLVKEAKYHYRVREDGSSAMQTAKANKNWFNHSLITFSKNLIDIIKNHEQKIPLFLQYMVMHDLKWKLLIKDISETPLDENEYSEFLTLIREVLSYIDDDVIIETKSVSHFYLYHALKIKHGENYSRYVYERETEQDYYLYREGKIVSKLSDQTLTIEILEENEDSIHIEGFWSSLFNSKGFKFYAKIGETKIKAKNIKRQHNDYISLGEVIKKYPGFSIDIPKGHLADNHHIEFFITKGKKRKLTKLRFFKYSGLSNDLYNTYVAKKDYIFYYNYKKLMFKKNNFKNRFIKEFRFLKSLHKSGEKSKKRKSAIKKALMARMVHHVFTIFNRKPVWLFIDRQDKADDNAEHLFKYAINKNDGVKKYFIIKKDSKDYDRIKKYGKVIPYRSFRHKILTLSSSKVISTHADIWVVNPFFNMEIYFRDLFNFEFIFLQHGITMADHSEWLNKYNKNIKLLVTSAKPEYRSIVKGNYNYKKENILLGGFPRYDNLKKSEGEKQLLIMPTWRKDIVLPKDQAKGVRPYNPKFKDSEYFSRYNALINDERLIEFAKKNNYKITFFPHPDIQQQIVDFEKHDYVEFADYNSSYQMLFNSSNIMITDFSSVAFDFAYEKKPVIYYQYEKSYHFKLDYYDYKKMGFGDVLENHNSLVDKVIYYMKNNSRMEDKYRKRVDNFFAYTDKNNRNRIYNAILELDNNKVAK.

The protein belongs to the glycosyltransferase 2 family.

The protein operates within cell wall biogenesis; poly(glucopyranosyl N-acetylgalactosamine 1-phosphate) teichoic acid biosynthesis. Its function is as follows. Involved in the biosynthesis of galactosamine-containing minor teichoic acid, a non-essential cell wall polymer in B.subtilis 168. The chain is Minor teichoic acid biosynthesis protein GgaB (ggaB) from Bacillus subtilis (strain 168).